We begin with the raw amino-acid sequence, 314 residues long: MSLKIVFAGTPQFAVPTLRALIDSSHRVLAVYTQPDRPSGRGQKIMESPVKEIARQNEIPIIQPFSLRDEVEQEKLIAMNADVMVVVAYGLILPKKALNAFRLGCVNVHASLLPRWRGAAPIQRAILAGDRETGISIMQMNEGLDTGDMLAKSACVISSEDTAADLHDRLSLIGADLLLESLAKLEKGDIKLEKQDEASATYASKIQKQEALINWRKSAVEIARQVRAFNPTPIAFTYFEGQPMRIWRATVVDEKTDFEPGVLVDADKKGISIAAGSGILRLHQLQLPGKRVCSAGDFINAHGDKLIPGKTVFG.

Residue 111-114 (SLLP) participates in (6S)-5,6,7,8-tetrahydrofolate binding.

It belongs to the Fmt family.

The catalysed reaction is L-methionyl-tRNA(fMet) + (6R)-10-formyltetrahydrofolate = N-formyl-L-methionyl-tRNA(fMet) + (6S)-5,6,7,8-tetrahydrofolate + H(+). Functionally, attaches a formyl group to the free amino group of methionyl-tRNA(fMet). The formyl group appears to play a dual role in the initiator identity of N-formylmethionyl-tRNA by promoting its recognition by IF2 and preventing the misappropriation of this tRNA by the elongation apparatus. This is Methionyl-tRNA formyltransferase from Coxiella burnetii (strain CbuK_Q154) (Coxiella burnetii (strain Q154)).